A 329-amino-acid chain; its full sequence is Diaminopimelate epimerase (329 aa).

Residues Asn-14 and Asn-73 each contribute to the substrate site. Cys-82 acts as the Proton donor in catalysis. Residues 83–84, Asn-170, Asn-206, and 224–225 contribute to the substrate site; these read GN and ER. The active-site Proton acceptor is Cys-233. A substrate-binding site is contributed by 234-235; it reads GT.

It belongs to the diaminopimelate epimerase family. As to quaternary structure, homodimer.

Its subcellular location is the cytoplasm. The catalysed reaction is (2S,6S)-2,6-diaminopimelate = meso-2,6-diaminopimelate. It participates in amino-acid biosynthesis; L-lysine biosynthesis via DAP pathway; DL-2,6-diaminopimelate from LL-2,6-diaminopimelate: step 1/1. Functionally, catalyzes the stereoinversion of LL-2,6-diaminopimelate (L,L-DAP) to meso-diaminopimelate (meso-DAP), a precursor of L-lysine and an essential component of the bacterial peptidoglycan. The chain is Diaminopimelate epimerase from Listeria monocytogenes serotype 4b (strain CLIP80459).